The chain runs to 323 residues: Sphingolipid delta(4)-desaturase DES1 (323 aa).

Glycine 2 carries N-myristoyl glycine lipidation. The next 2 helical transmembrane spans lie at 41 to 61 and 68 to 88; these read SNLIWIVIMMVLTQFVAFYLV and WVLFWAYAFGSCVNHSMTLAI. The Histidine box-1 signature appears at 89–93; it reads HEVSH. A helical membrane pass occupies residues 102–122; that stretch reads AMWNRWFGIFANLPIGVPYSV. Positions 128–132 match the Histidine box-2 motif; that stretch reads HMDHH. A run of 3 helical transmembrane segments spans residues 152 to 172, 184 to 204, and 209 to 229; these read FFCTTFRKFIWVILQPLFYAF, YLEIINTVIQITFDIVVYYVL, and LVYMLAASLFGLGLHPISGHF. The Histidine box-3 signature appears at 259–263; the sequence is HNEHH. Residue serine 307 is modified to Phosphoserine.

The protein belongs to the fatty acid desaturase type 1 family. DEGS subfamily. In terms of assembly, interacts with RLBP1; the interaction increases synthesis of chromophore-precursors by DEGS1. Post-translationally, myristoylation can target the enzyme to the mitochondria leading to an increase in ceramide levels.

Its subcellular location is the mitochondrion membrane. It is found in the endoplasmic reticulum membrane. It carries out the reaction an N-acylsphinganine + 2 Fe(II)-[cytochrome b5] + O2 + 2 H(+) = an N-acylsphing-4-enine + 2 Fe(III)-[cytochrome b5] + 2 H2O. The catalysed reaction is all-trans-retinol = 11-cis-retinol. It catalyses the reaction all-trans-retinol = 9-cis-retinol. The enzyme catalyses all-trans-retinol = 13-cis-retinol. It carries out the reaction 11-cis-retinol = 13-cis-retinol. The catalysed reaction is 11-cis-retinol = 9-cis-retinol. Its function is as follows. Has sphingolipid-delta-4-desaturase activity. Converts D-erythro-sphinganine to D-erythro-sphingosine (E-sphing-4-enine). Catalyzes the equilibrium isomerization of retinols. The sequence is that of Sphingolipid delta(4)-desaturase DES1 (DEGS1) from Bos taurus (Bovine).